The sequence spans 285 residues: ATP phosphoribosyltransferase (285 aa).

Belongs to the ATP phosphoribosyltransferase family. Long subfamily. It depends on Mg(2+) as a cofactor.

Its subcellular location is the cytoplasm. It catalyses the reaction 1-(5-phospho-beta-D-ribosyl)-ATP + diphosphate = 5-phospho-alpha-D-ribose 1-diphosphate + ATP. Its pathway is amino-acid biosynthesis; L-histidine biosynthesis; L-histidine from 5-phospho-alpha-D-ribose 1-diphosphate: step 1/9. Its activity is regulated as follows. Feedback inhibited by histidine. Its function is as follows. Catalyzes the condensation of ATP and 5-phosphoribose 1-diphosphate to form N'-(5'-phosphoribosyl)-ATP (PR-ATP). Has a crucial role in the pathway because the rate of histidine biosynthesis seems to be controlled primarily by regulation of HisG enzymatic activity. The protein is ATP phosphoribosyltransferase of Streptomyces coelicolor (strain ATCC BAA-471 / A3(2) / M145).